Consider the following 313-residue polypeptide: Glyoxylate/hydroxypyruvate reductase A HPR2 (313 aa).

NADP(+)-binding positions include 152–155 (LGRI), 174–176 (SRT), 230–232 (IGR), and D256. R232 is an active-site residue. E261 is a catalytic residue. H279 acts as the Proton donor in catalysis. 279–281 (HVG) is an NADP(+) binding site.

It belongs to the D-isomer specific 2-hydroxyacid dehydrogenase family. GyaR subfamily. In terms of assembly, homodimer.

The protein localises to the cytoplasm. It carries out the reaction glycolate + NADP(+) = glyoxylate + NADPH + H(+). The enzyme catalyses (R)-glycerate + NAD(+) = 3-hydroxypyruvate + NADH + H(+). It catalyses the reaction (R)-glycerate + NADP(+) = 3-hydroxypyruvate + NADPH + H(+). With respect to regulation, strongly inhibited by oxalate. Catalyzes the NADPH-dependent reduction of glyoxylate and hydroxypyruvate (HP) into glycolate and glycerate in the cytoplasm, thus providing a cytosolic bypass to the photorespiratory core cycle. Mostly active in the presence of NADPH and hydroxypyruvate. This Arabidopsis thaliana (Mouse-ear cress) protein is Glyoxylate/hydroxypyruvate reductase A HPR2 (HPR2).